A 341-amino-acid chain; its full sequence is L-threonine 3-dehydrogenase (341 aa).

Residue Cys-38 participates in Zn(2+) binding. Residues Thr-40 and His-43 each act as charge relay system in the active site. Zn(2+) contacts are provided by His-63, Glu-64, Cys-93, Cys-96, Cys-99, and Cys-107. Residues Ile-175, Asp-195, Arg-200, 262–264, and 286–287 each bind NAD(+); these read LGI and IY.

This sequence belongs to the zinc-containing alcohol dehydrogenase family. In terms of assembly, homotetramer. It depends on Zn(2+) as a cofactor.

The protein localises to the cytoplasm. It catalyses the reaction L-threonine + NAD(+) = (2S)-2-amino-3-oxobutanoate + NADH + H(+). Its pathway is amino-acid degradation; L-threonine degradation via oxydo-reductase pathway; glycine from L-threonine: step 1/2. Catalyzes the NAD(+)-dependent oxidation of L-threonine to 2-amino-3-ketobutyrate. In Shewanella pealeana (strain ATCC 700345 / ANG-SQ1), this protein is L-threonine 3-dehydrogenase.